Here is a 352-residue protein sequence, read N- to C-terminus: UDP-N-acetylglucosamine--N-acetylmuramyl-(pentapeptide) pyrophosphoryl-undecaprenol N-acetylglucosamine transferase (352 aa).

2 residues coordinate UDP-N-acetyl-alpha-D-glucosamine: S195 and Q287.

This sequence belongs to the glycosyltransferase 28 family. MurG subfamily.

It is found in the cell membrane. The catalysed reaction is Mur2Ac(oyl-L-Ala-gamma-D-Glu-L-Lys-D-Ala-D-Ala)-di-trans,octa-cis-undecaprenyl diphosphate + UDP-N-acetyl-alpha-D-glucosamine = beta-D-GlcNAc-(1-&gt;4)-Mur2Ac(oyl-L-Ala-gamma-D-Glu-L-Lys-D-Ala-D-Ala)-di-trans,octa-cis-undecaprenyl diphosphate + UDP + H(+). It functions in the pathway cell wall biogenesis; peptidoglycan biosynthesis. Functionally, cell wall formation. Catalyzes the transfer of a GlcNAc subunit on undecaprenyl-pyrophosphoryl-MurNAc-pentapeptide (lipid intermediate I) to form undecaprenyl-pyrophosphoryl-MurNAc-(pentapeptide)GlcNAc (lipid intermediate II). The polypeptide is UDP-N-acetylglucosamine--N-acetylmuramyl-(pentapeptide) pyrophosphoryl-undecaprenol N-acetylglucosamine transferase (Streptococcus pneumoniae (strain Taiwan19F-14)).